Consider the following 287-residue polypeptide: Large ribosomal subunit protein uL2 (287 aa).

Positions 221–287 are disordered; sequence RGSVMNPCDH…SKRSRGGRDS (67 aa). Residues 258–287 show a composition bias toward basic residues; that stretch reads KTRKRNKPSNKFVLRKRRKTSKRSRGGRDS.

This sequence belongs to the universal ribosomal protein uL2 family. In terms of assembly, part of the 50S ribosomal subunit. Forms a bridge to the 30S subunit in the 70S ribosome.

In terms of biological role, one of the primary rRNA binding proteins. Required for association of the 30S and 50S subunits to form the 70S ribosome, for tRNA binding and peptide bond formation. It has been suggested to have peptidyltransferase activity; this is somewhat controversial. Makes several contacts with the 16S rRNA in the 70S ribosome. The sequence is that of Large ribosomal subunit protein uL2 from Synechococcus sp. (strain CC9311).